We begin with the raw amino-acid sequence, 343 residues long: L-threonine 3-dehydrogenase (343 aa).

Zn(2+) is bound at residue C40. Residues T42 and H45 each act as charge relay system in the active site. Zn(2+) is bound by residues H65, E66, C95, C98, C101, and C109. Residues I177, D197, R202, 264 to 266 (LGI), and 288 to 289 (IY) each bind NAD(+).

It belongs to the zinc-containing alcohol dehydrogenase family. In terms of assembly, homotetramer. Zn(2+) serves as cofactor.

Its subcellular location is the cytoplasm. It catalyses the reaction L-threonine + NAD(+) = (2S)-2-amino-3-oxobutanoate + NADH + H(+). It participates in amino-acid degradation; L-threonine degradation via oxydo-reductase pathway; glycine from L-threonine: step 1/2. Catalyzes the NAD(+)-dependent oxidation of L-threonine to 2-amino-3-ketobutyrate. The chain is L-threonine 3-dehydrogenase from Aliivibrio fischeri (strain ATCC 700601 / ES114) (Vibrio fischeri).